The primary structure comprises 534 residues: Cytokine-like nuclear factor N-PAC (534 aa).

Residues 8-66 (QGDLVWGKLGRYPPWPGKIVNPPKDLKKPRGKKCLFVKFFGTEDHAWIKVEQLKPYHAH) enclose the PWWP domain. Basic and acidic residues-rich tracts occupy residues 93-122 (AKAKEHAKEHNSSDEKGKKGEGKGKKQTGE) and 138-157 (RSRDQSPRKRGRPPKDDKDS). The interval 93–168 (AKAKEHAKEH…SPQPSSLKKL (76 aa)) is disordered. A DNA-binding region (a.T hook) is located at residues 144 to 156 (PRKRGRPPKDDKD). Positions 190–193 (DSWL) are interaction with histone H3. The tract at residues 242–534 (GNIIPTDKKI…MSAVYRAYIH (293 aa)) is dehydrogenase domain. NAD(+) is bound by residues 252–266 (GFLGLGLMGSGIVSN), Thr-343, and Lys-486.

This sequence belongs to the HIBADH-related family. NP60 subfamily. Homotetramere. Binds to mononucleosomes.

It is found in the nucleus. It localises to the chromosome. Cytokine-like nuclear factor with chromatin gene reader activity involved in chromatin modification and regulation of gene expression. Acts as a nucleosome-destabilizing factor that is recruited to genes during transcriptional activation. Recognizes and binds histone H3 without a preference for specific epigenetic markers and also binds DNA. Interacts with KDM1B and promotes its histone demethylase activity by facilitating the capture of H3 tails, they form a multifunctional enzyme complex that modifies transcribed chromatin and facilitates Pol II transcription through nucleosomes. In Xenopus tropicalis (Western clawed frog), this protein is Cytokine-like nuclear factor N-PAC (glyr1).